We begin with the raw amino-acid sequence, 447 residues long: ATP-dependent protease ATPase subunit HslU (447 aa).

Residues I18, 60–65 (GVGKTE), D259, E325, and R397 contribute to the ATP site.

The protein belongs to the ClpX chaperone family. HslU subfamily. A double ring-shaped homohexamer of HslV is capped on each side by a ring-shaped HslU homohexamer. The assembly of the HslU/HslV complex is dependent on binding of ATP.

It localises to the cytoplasm. Functionally, ATPase subunit of a proteasome-like degradation complex; this subunit has chaperone activity. The binding of ATP and its subsequent hydrolysis by HslU are essential for unfolding of protein substrates subsequently hydrolyzed by HslV. HslU recognizes the N-terminal part of its protein substrates and unfolds these before they are guided to HslV for hydrolysis. The chain is ATP-dependent protease ATPase subunit HslU from Burkholderia ambifaria (strain ATCC BAA-244 / DSM 16087 / CCUG 44356 / LMG 19182 / AMMD) (Burkholderia cepacia (strain AMMD)).